A 723-amino-acid polypeptide reads, in one-letter code: Nuclear intron maturase 3, mitochondrial (723 aa).

A mitochondrion-targeting transit peptide spans 1-26 (MVLRLRVHSFYNRGISFLVSSSLRNL). Positions 532–597 (VSAPEELVRK…HYTKDLRVSD (66 aa)) are intron maturase type-2; degenerate. The segment at 646–700 (CAASFCERSDTIMHRVHLLQNRLHINPLDEEKWVPGMGTIHSALNRKCLPLCSTH) adopts a THAP-type zinc-finger fold.

The protein belongs to the plant nuclear intron maturase (nMat) family.

It localises to the mitochondrion. Functionally, nuclear-encoded maturase required for splicing of group-II introns in mitochondria. Necessary for mitochondrial biogenesis during early developmental stages. The sequence is that of Nuclear intron maturase 3, mitochondrial from Arabidopsis thaliana (Mouse-ear cress).